We begin with the raw amino-acid sequence, 495 residues long: Catalase B (495 aa).

The tract at residues 1 to 25 is disordered; sequence MSNNKKLTSLFGAPVSDRENSMTAG. Catalysis depends on residues His-55 and Asn-128. A heme-binding site is contributed by Tyr-338.

The protein belongs to the catalase family. In terms of assembly, homodimer. The cofactor is heme.

It catalyses the reaction 2 H2O2 = O2 + 2 H2O. In terms of biological role, decomposes hydrogen peroxide into water and oxygen; serves to protect cells from the toxic effects of hydrogen peroxide. The chain is Catalase B (katB) from Staphylococcus xylosus.